The primary structure comprises 352 residues: Protein RecA (352 aa).

Residue 67 to 74 (GPESSGKT) coordinates ATP.

The protein belongs to the RecA family.

It is found in the cytoplasm. Can catalyze the hydrolysis of ATP in the presence of single-stranded DNA, the ATP-dependent uptake of single-stranded DNA by duplex DNA, and the ATP-dependent hybridization of homologous single-stranded DNAs. It interacts with LexA causing its activation and leading to its autocatalytic cleavage. This chain is Protein RecA, found in Chlamydia trachomatis serovar D (strain ATCC VR-885 / DSM 19411 / UW-3/Cx).